Here is a 900-residue protein sequence, read N- to C-terminus: Bifunctional uridylyltransferase/uridylyl-removing enzyme (900 aa).

The interval 1–342 (MPQVDPELFD…WEGESGPIVP (342 aa)) is uridylyltransferase. Residues 343–705 (LNSRFQVRDG…TTQREFEGGT (363 aa)) are uridylyl-removing. Residues 461-583 (VDAHTLNVIK…VGDETHLDYL (123 aa)) enclose the HD domain. ACT domains are found at residues 706–789 (QIFI…IIQR) and 816–896 (ILEI…PSPS).

It belongs to the GlnD family. The cofactor is Mg(2+).

The enzyme catalyses [protein-PII]-L-tyrosine + UTP = [protein-PII]-uridylyl-L-tyrosine + diphosphate. It carries out the reaction [protein-PII]-uridylyl-L-tyrosine + H2O = [protein-PII]-L-tyrosine + UMP + H(+). Its activity is regulated as follows. Uridylyltransferase (UTase) activity is inhibited by glutamine, while glutamine activates uridylyl-removing (UR) activity. Functionally, modifies, by uridylylation and deuridylylation, the PII regulatory proteins (GlnB and homologs), in response to the nitrogen status of the cell that GlnD senses through the glutamine level. Under low glutamine levels, catalyzes the conversion of the PII proteins and UTP to PII-UMP and PPi, while under higher glutamine levels, GlnD hydrolyzes PII-UMP to PII and UMP (deuridylylation). Thus, controls uridylylation state and activity of the PII proteins, and plays an important role in the regulation of nitrogen fixation and metabolism. The polypeptide is Bifunctional uridylyltransferase/uridylyl-removing enzyme (Stutzerimonas stutzeri (strain A1501) (Pseudomonas stutzeri)).